Here is a 200-residue protein sequence, read N- to C-terminus: Transcription elongation factor A protein-like 3 (200 aa).

The tract at residues 1–200 is disordered; that stretch reads MEKPYNKNEG…QRGLHDIPYL (200 aa). Residues 20–36 are compositionally biased toward acidic residues; the sequence is DEVEPDDEGKSDEEEKP. Ser30 is subject to Phosphoserine. Residues 37–50 are compositionally biased toward basic and acidic residues; it reads DVEGKTECEGKRED. A compositionally biased stretch (acidic residues) spans 51-64; the sequence is EGEPGDEGQLEDEG. Residue Ser65 is modified to Phosphoserine. Basic and acidic residues-rich tracts occupy residues 65–80, 96–107, and 115–154; these read SQEKQGRSEGEGKPQG, AAEKRPAEDYVP, and DRGTDDSPKDSQEDLQERHLSSEEMMRECGDVSRAQEELR.

This sequence belongs to the TFS-II family. TFA subfamily.

The protein resides in the nucleus. May be involved in transcriptional regulation. The protein is Transcription elongation factor A protein-like 3 (TCEAL3) of Homo sapiens (Human).